The following is a 313-amino-acid chain: 3-ketodihydrosphingosine reductase TSC10 (313 aa).

NADP(+) is bound at residue L12. G15, S17, and G19 together coordinate NADPH. Residues 15–19 (GGSQG) carry the GXSXG motif. L20 is an NADP(+) binding site. NADPH contacts are provided by R47, K51, and D86. An NADP(+)-binding site is contributed by D86. S160 (proton donor) is an active-site residue. Y174, K178, and S207 together coordinate NADP(+). Y174 serves as the catalytic Proton acceptor. The active-site Lowers pKa of active site Tyr is K178. The helical transmembrane segment at 278–298 (VFSWILGALLNITIVPIYMLI) threads the bilayer.

This sequence belongs to the short-chain dehydrogenases/reductases (SDR) family.

The protein localises to the endoplasmic reticulum membrane. The enzyme catalyses sphinganine + NADP(+) = 3-oxosphinganine + NADPH + H(+). The protein operates within lipid metabolism; sphingolipid metabolism. Its function is as follows. Catalyzes the reduction of 3'-oxosphinganine (3-ketodihydrosphingosine/KDS) to sphinganine (dihydrosphingosine/DHS), the second step of de novo sphingolipid biosynthesis. This chain is 3-ketodihydrosphingosine reductase TSC10 (TSC10), found in Kluyveromyces lactis (strain ATCC 8585 / CBS 2359 / DSM 70799 / NBRC 1267 / NRRL Y-1140 / WM37) (Yeast).